Reading from the N-terminus, the 1486-residue chain is Chromosome partition protein MukB (1486 aa).

Gly-34 to Ser-41 is a binding site for ATP. Coiled coils occupy residues Leu-326–Gln-418, Leu-444–Gln-480, and Arg-509–Val-603. Residues Pro-666–Arg-783 form a flexible hinge region. Coiled coils occupy residues Glu-835–Glu-923, Glu-977–Ala-1115, and Val-1209–Ser-1266.

This sequence belongs to the SMC family. MukB subfamily. Homodimerization via its hinge domain. Binds to DNA via its C-terminal region. Interacts, and probably forms a ternary complex, with MukE and MukF via its C-terminal region. The complex formation is stimulated by calcium or magnesium. Interacts with tubulin-related protein FtsZ.

Its subcellular location is the cytoplasm. The protein resides in the nucleoid. Its function is as follows. Plays a central role in chromosome condensation, segregation and cell cycle progression. Functions as a homodimer, which is essential for chromosome partition. Involved in negative DNA supercoiling in vivo, and by this means organize and compact chromosomes. May achieve or facilitate chromosome segregation by condensation DNA from both sides of a centrally located replisome during cell division. The sequence is that of Chromosome partition protein MukB from Escherichia fergusonii (strain ATCC 35469 / DSM 13698 / CCUG 18766 / IAM 14443 / JCM 21226 / LMG 7866 / NBRC 102419 / NCTC 12128 / CDC 0568-73).